A 226-amino-acid chain; its full sequence is Prolactin (226 aa).

Residues M1–P29 form the signal peptide. The cysteines at positions 33 and 38 are disulfide-linked. 2 positions are modified to phosphoserine: S53 and S117. Disulfide bonds link C85/C201 and C218/C226.

This sequence belongs to the somatotropin/prolactin family. As to quaternary structure, interacts with PRLR.

The protein localises to the secreted. Functionally, prolactin acts primarily on the mammary gland by promoting lactation. This Mus musculus (Mouse) protein is Prolactin (Prl).